The primary structure comprises 1321 residues: Bile salt export pump (1321 aa).

Residues 1-62 (MSDSVILRSV…FSSWTDIWLM (62 aa)) lie on the Cytoplasmic side of the membrane. Residues 62 to 385 (MCMGSLCACI…ASPCLEAFAA (324 aa)) enclose the ABC transmembrane type-1 1 domain. The helical transmembrane segment at 63 to 83 (CMGSLCACIHGIAQPGVLLIF) threads the bilayer. Residues 84 to 147 (GTMTDVFIDY…MIRFAGYYAG (64 aa)) lie on the Extracellular side of the membrane. Asn109, Asn116, Asn122, and Asn125 each carry an N-linked (GlcNAc...) asparagine glycan. Residues 148-168 (IGIAVLTTGYIQICFWGIAAA) traverse the membrane as a helical segment. At 169-215 (HQIQKMRKSYFRKIMRMGIGWVDCNSVGKLNTPFSVDFNKINDSSAD) the chain is on the cytoplasmic side. Residues 216 to 236 (QLAIFIQGMTSPIFGFLVGFS) form a helical membrane-spanning segment. Residues 237-240 (QWWK) lie on the Extracellular side of the membrane. Residues 241-261 (LTLVIISVSPLIGLGAAIIGL) form a helical membrane-spanning segment. Residues 262 to 319 (SVSKFTDYELKAYAKAGSVADEVISSMRTVAAFGGEKKEVERYEKNLVFAQRWGIRKG) are Cytoplasmic-facing. A helical membrane pass occupies residues 320-340 (IVMGFFTGYMWCLIFFCYALA). The Extracellular segment spans residues 341-353 (FWYGSKLVLEEGE). A helical membrane pass occupies residues 354-374 (YSPGALVQIFLSVIIGALNLG). The Cytoplasmic segment spans residues 375-755 (NASPCLEAFA…KLNAPEWPYM (381 aa)). The ABC transporter 1 domain occupies 420 to 656 (IEFHNVTFHY…KGVYFALVTL (237 aa)). 455–462 (GPSGAGKS) is an ATP binding site. At Thr586 the chain carries Phosphothreonine. The residue at position 587 (Ser587) is a Phosphoserine. The interaction with HAX1 stretch occupies residues 651–672 (FALVTLQSQRNQGDQEENEKDA). Residues 659 to 735 (QRNQGDQEEN…KDKDLPAQED (77 aa)) are disordered. Over residues 664–677 (DQEENEKDATEDDI) the composition is skewed to acidic residues. Ser690, Ser701, and Ser704 each carry phosphoserine. Residues 714–731 (VEDHKSTHEEDRKDKDLP) show a composition bias toward basic and acidic residues. The 289-residue stretch at 755 to 1043 (MLLGSMGAAV…ASSYTPSYAK (289 aa)) folds into the ABC transmembrane type-1 2 domain. A helical membrane pass occupies residues 756–776 (LLGSMGAAVNGAVTPLYAFLF). Topologically, residues 777 to 794 (SQILGTFSLPDKEEQRSQ) are extracellular. A helical transmembrane segment spans residues 795 to 815 (INGICLLFVTLGCVSFFTQFL). The Cytoplasmic portion of the chain corresponds to 816–869 (QGYTFAKSGELLTKRLRKFGFRAMLGQDIGWFDDLRNSPGALTTRLATDASQVQ). A run of 2 helical transmembrane segments spans residues 870 to 890 (GATGSQIGMMVNSFTNVTVAM) and 891 to 911 (IIAFLFSWKLTLGIVCFFPFL). Residues 912 to 979 (ALSGALQTKM…PYKMAIKKAN (68 aa)) lie on the Cytoplasmic side of the membrane. The helical transmembrane segment at 980 to 1000 (VYGLCFGFSQCITFIANSASY) threads the bilayer. At 1001 to 1011 (RYGGYLISNEG) the chain is on the extracellular side. A helical transmembrane segment spans residues 1012–1032 (LHFSYVFRVISAVVLSATALG). The Cytoplasmic segment spans residues 1033–1321 (RASSYTPSYA…KLVTTGSPIS (289 aa)). One can recognise an ABC transporter 2 domain in the interval 1078–1316 (IDFVDCKFTY…KGAYYKLVTT (239 aa)). Residue 1113–1120 (GSSGCGKS) participates in ATP binding. Phosphoserine occurs at positions 1214 and 1321.

Belongs to the ABC transporter superfamily. ABCB family. Multidrug resistance exporter (TC 3.A.1.201) subfamily. As to quaternary structure, interacts with HAX1. Interacts with the adapter protein complex 2 (AP-2) throught AP2A2 or AP2A1; this interaction regulates cell membrane expression of ABCB11 through its internalization in a clathrin-dependent manner and its subsequent degradation. In terms of processing, N-glycosylated. Ubiquitinated; short-chain ubiquitination regulates cell-Surface expression of ABCB11. As to expression, expressed predominantly, if not exclusively in the liver, where it was further localized to the canalicular microvilli and to subcanalicular vesicles of the hepatocytes by in situ.

It is found in the apical cell membrane. Its subcellular location is the recycling endosome membrane. The protein localises to the endosome. It localises to the cell membrane. The enzyme catalyses cholate(in) + ATP + H2O = cholate(out) + ADP + phosphate + H(+). It carries out the reaction taurocholate(in) + ATP + H2O = taurocholate(out) + ADP + phosphate + H(+). The catalysed reaction is glycocholate(in) + ATP + H2O = glycocholate(out) + ADP + phosphate + H(+). It catalyses the reaction glycochenodeoxycholate(in) + ATP + H2O = glycochenodeoxycholate(out) + ADP + phosphate + H(+). The enzyme catalyses taurochenodeoxycholate(in) + ATP + H2O = taurochenodeoxycholate(out) + ADP + phosphate + H(+). It carries out the reaction glycoursodeoxycholate(in) + ATP + H2O = glycoursodeoxycholate(out) + ADP + phosphate + H(+). The catalysed reaction is tauroursodeoxycholate(in) + ATP + H2O = tauroursodeoxycholate(out) + ADP + phosphate + H(+). It catalyses the reaction taurodeoxycholate(in) + ATP + H2O = taurodeoxycholate(out) + ADP + phosphate + H(+). The enzyme catalyses taurolithocholate 3-sulfate(in) + ATP + H2O = taurolithocholate 3-sulfate(out) + ADP + phosphate + H(+). It carries out the reaction pravastatin(in) + ATP + H2O = pravastatin(out) + ADP + phosphate + H(+). With respect to regulation, the uptake of taurocholate is inhibited by taurolithocholate sulfate with an IC(50) of 9 uM. Pravastatin competitively inhibits the transport of taurocholic acid. Cyclosporin A, glibenclamide, rifampicin and troglitazonestrongly competitively inhibit the transport activity of taurocholate. The canalicular transport activity of taurocholate is strongly dependent on canalicular membrane cholesterol content. The uptake of taurocholate is increased by short- and medium-chain fatty acids. Cholesterol increases transport capacity of taurocholate without affecting the affinity for the substrate. In terms of biological role, catalyzes the transport of the major hydrophobic bile salts, such as taurine and glycine-conjugated cholic acid across the canalicular membrane of hepatocytes in an ATP-dependent manner, therefore participates in hepatic bile acid homeostasis and consequently to lipid homeostasis through regulation of biliary lipid secretion in a bile salts dependent manner. Transports taurine-conjugated bile salts more rapidly than glycine-conjugated bile salts. Also transports non-bile acid compounds, such as pravastatin and fexofenadine in an ATP-dependent manner and may be involved in their biliary excretion. The polypeptide is Bile salt export pump (Oryctolagus cuniculus (Rabbit)).